A 310-amino-acid polypeptide reads, in one-letter code: Aspartate carbamoyltransferase catalytic subunit (310 aa).

Residues arginine 55 and threonine 56 each contribute to the carbamoyl phosphate site. L-aspartate is bound at residue lysine 85. Carbamoyl phosphate-binding residues include arginine 106, histidine 135, and glutamine 138. L-aspartate is bound by residues arginine 168 and arginine 230. The carbamoyl phosphate site is built by leucine 268 and proline 269.

This sequence belongs to the aspartate/ornithine carbamoyltransferase superfamily. ATCase family. As to quaternary structure, heterododecamer (2C3:3R2) of six catalytic PyrB chains organized as two trimers (C3), and six regulatory PyrI chains organized as three dimers (R2).

The enzyme catalyses carbamoyl phosphate + L-aspartate = N-carbamoyl-L-aspartate + phosphate + H(+). It functions in the pathway pyrimidine metabolism; UMP biosynthesis via de novo pathway; (S)-dihydroorotate from bicarbonate: step 2/3. Its function is as follows. Catalyzes the condensation of carbamoyl phosphate and aspartate to form carbamoyl aspartate and inorganic phosphate, the committed step in the de novo pyrimidine nucleotide biosynthesis pathway. In Buchnera aphidicola subsp. Acyrthosiphon pisum (strain 5A), this protein is Aspartate carbamoyltransferase catalytic subunit.